Here is a 1199-residue protein sequence, read N- to C-terminus: DNA polymerase beta (1199 aa).

This sequence belongs to the DNA polymerase type-B family.

The catalysed reaction is DNA(n) + a 2'-deoxyribonucleoside 5'-triphosphate = DNA(n+1) + diphosphate. Its function is as follows. DNA-directed DNA polymerase involved in viral DNA replication. The chain is DNA polymerase beta from Ornithodoros (relapsing fever ticks).